A 260-amino-acid chain; its full sequence is 3-methyl-2-oxobutanoate hydroxymethyltransferase (260 aa).

The Mg(2+) site is built by Asp-42 and Asp-81. Residues 42-43 (DS), Asp-81, and Lys-109 contribute to the 3-methyl-2-oxobutanoate site. A Mg(2+)-binding site is contributed by Glu-111. Glu-178 serves as the catalytic Proton acceptor.

It belongs to the PanB family. As to quaternary structure, homodecamer; pentamer of dimers. Mg(2+) is required as a cofactor.

The protein resides in the cytoplasm. It carries out the reaction 3-methyl-2-oxobutanoate + (6R)-5,10-methylene-5,6,7,8-tetrahydrofolate + H2O = 2-dehydropantoate + (6S)-5,6,7,8-tetrahydrofolate. Its pathway is cofactor biosynthesis; (R)-pantothenate biosynthesis; (R)-pantoate from 3-methyl-2-oxobutanoate: step 1/2. Its function is as follows. Catalyzes the reversible reaction in which hydroxymethyl group from 5,10-methylenetetrahydrofolate is transferred onto alpha-ketoisovalerate to form ketopantoate. This is 3-methyl-2-oxobutanoate hydroxymethyltransferase from Vesicomyosocius okutanii subsp. Calyptogena okutanii (strain HA).